The primary structure comprises 251 residues: MKLMRIQEMEEYILSHGTVSLDELCQVFNVSKNTVRRDINKLTEKGAIEKVYGGVTSIEKTALVPFENRTIQHQDEKTKIAHYASRFIEDHDLVFIDSGTTTKSILDTLDPAKNVTILTNSLDIINAASALKNINLIIIGNNYKRKTRSFVGMDDPAMLDKYNINKAFMSATGTTLTHGLTNSDLLEYEIKKRISEKAKEVYLLADHSKFGKSTLLTYAPFDRLHCIVTSQPLDDEYTQYCNEHQIGIHLA.

Residues 1–57 (MKLMRIQEMEEYILSHGTVSLDELCQVFNVSKNTVRRDINKLTEKGAIEKVYGGVTS) form the HTH deoR-type domain. The segment at residues 19–38 (VSLDELCQVFNVSKNTVRRD) is a DNA-binding region (H-T-H motif).

Iol operon repressor. The protein is HTH-type transcriptional regulator IolR (iolR) of Bacillus subtilis (strain 168).